The primary structure comprises 551 residues: Tropolone cluster transcription factor tropK (551 aa).

The disordered stretch occupies residues 1–21 (MSVAIKMSTNTVGGQSTRQPP). A compositionally biased stretch (polar residues) spans 7 to 20 (MSTNTVGGQSTRQP). A DNA-binding region (zn(2)-C6 fungal-type) is located at residues 25–52 (CLHCRNKKMKCDALQPRCKNCFNAGVEC).

The protein resides in the nucleus. Functionally, transcription factor that regulates the expression of the gene cluster that mediates the biosynthesis tropolone class of fungal maleic anhydrides, including stipitaldehydic, stipitatonic and stipitatic acids. This Talaromyces stipitatus (strain ATCC 10500 / CBS 375.48 / QM 6759 / NRRL 1006) (Penicillium stipitatum) protein is Tropolone cluster transcription factor tropK.